The primary structure comprises 82 residues: Apovitellenin-1 (82 aa).

It belongs to the apovitellenin family. As to quaternary structure, monomer. In terms of tissue distribution, found in egg yolk and in plasma.

Protein component of the very low density lipoprotein (VLDL) of egg-laying females. Potent lipoprotein lipase inhibitor, preventing the loss of triglycerides from VLDL on their way from the liver to the growing oocytes. In Anas platyrhynchos (Mallard), this protein is Apovitellenin-1.